We begin with the raw amino-acid sequence, 375 residues long: DNA replication and repair protein RecF (375 aa).

30-37 (GENAQGKT) lines the ATP pocket.

The protein belongs to the RecF family.

The protein resides in the cytoplasm. In terms of biological role, the RecF protein is involved in DNA metabolism; it is required for DNA replication and normal SOS inducibility. RecF binds preferentially to single-stranded, linear DNA. It also seems to bind ATP. The protein is DNA replication and repair protein RecF of Bacillus mycoides (strain KBAB4) (Bacillus weihenstephanensis).